Consider the following 107-residue polypeptide: Metallothionein-1 (107 aa).

The propeptide occupies 1–2 (MD).

Belongs to the metallothionein superfamily. Type 7 family.

In terms of biological role, the metallothioneins are involved in the cellular sequestration of toxic metal ions. Binds 12 cadmium ions per molecule. In Tetrahymena pigmentosa, this protein is Metallothionein-1.